Consider the following 85-residue polypeptide: UPF0335 protein BQ12070 (85 aa).

This sequence belongs to the UPF0335 family.

This Bartonella quintana (strain Toulouse) (Rochalimaea quintana) protein is UPF0335 protein BQ12070.